Consider the following 907-residue polypeptide: Protein translocase subunit SecA (907 aa).

ATP contacts are provided by residues Gln-87, 105-109 (GEGKT), and Asp-512. The tract at residues 869-897 (AESLSAHTPVVREGEKVGRNDPCPCGSGR) is disordered. A compositionally biased stretch (basic and acidic residues) spans 878–887 (VVREGEKVGR). Zn(2+) contacts are provided by Cys-891, Cys-893, Cys-902, and His-903.

This sequence belongs to the SecA family. Monomer and homodimer. Part of the essential Sec protein translocation apparatus which comprises SecA, SecYEG and auxiliary proteins SecDF-YajC and YidC. Zn(2+) serves as cofactor.

Its subcellular location is the cell inner membrane. It localises to the cytoplasm. The catalysed reaction is ATP + H2O + cellular proteinSide 1 = ADP + phosphate + cellular proteinSide 2.. Its function is as follows. Part of the Sec protein translocase complex. Interacts with the SecYEG preprotein conducting channel. Has a central role in coupling the hydrolysis of ATP to the transfer of proteins into and across the cell membrane, serving both as a receptor for the preprotein-SecB complex and as an ATP-driven molecular motor driving the stepwise translocation of polypeptide chains across the membrane. The polypeptide is Protein translocase subunit SecA (Shewanella sediminis (strain HAW-EB3)).